The following is a 194-amino-acid chain: Cathelicidin-related peptide isoform 3 (194 aa).

A signal peptide spans 1–22; the sequence is MQGFFWKTWLVLAVCGTPASLA. The propeptide occupies 23 to 164; sequence HRPLSYGEAL…DQPKRVKRFK (142 aa). Cystine bridges form between C79-C90 and C101-C118. The segment covering 125–145 has biased composition (acidic residues); sequence EEEEEEEEEEQKAEAENDEEV. The interval 125-156 is disordered; the sequence is EEEEEEEEEEQKAEAENDEEVEKEKGDEEKDQ. The span at 146–156 shows a compositional bias: basic and acidic residues; sequence EKEKGDEEKDQ.

The protein belongs to the cathelicidin family. As to expression, expressed by the venom gland.

The protein localises to the secreted. The protein resides in the target cell membrane. Its function is as follows. Potent antimicrobial peptide against Gram-negative and Gram-positive bacteria. Adopts an amphipathic alpha helical conformation, that may allow to partition into the target membrane. Low hemolytic activities have been observed on mammalian cells. In Crotalus durissus cascavella (Northeastern Brazilian rattlesnake), this protein is Cathelicidin-related peptide isoform 3.